The chain runs to 87 residues: Phosphoribosyl-ATP pyrophosphatase (87 aa).

It belongs to the PRA-PH family.

Its subcellular location is the cytoplasm. The enzyme catalyses 1-(5-phospho-beta-D-ribosyl)-ATP + H2O = 1-(5-phospho-beta-D-ribosyl)-5'-AMP + diphosphate + H(+). Its pathway is amino-acid biosynthesis; L-histidine biosynthesis; L-histidine from 5-phospho-alpha-D-ribose 1-diphosphate: step 2/9. The protein is Phosphoribosyl-ATP pyrophosphatase of Nocardioides sp. (strain ATCC BAA-499 / JS614).